The chain runs to 420 residues: Odorant receptor 63a (420 aa).

The Cytoplasmic portion of the chain corresponds to 1–43; the sequence is MYSPEEAAELKRRNYRSIREMIRLSYTVGFNLLDPSRCGQVLR. Residues 44–64 form a helical membrane-spanning segment; sequence IWTIVLSVSSLASLYGHWQML. The Extracellular portion of the chain corresponds to 65–76; that stretch reads ARYIHDIPRIGE. Residues 77 to 97 form a helical membrane-spanning segment; the sequence is TAGTALQFLTSIAKMWYFLFA. The Cytoplasmic portion of the chain corresponds to 98 to 150; it reads HRQIYELLRKARCHELLQKCELFERMSDLPVIKEIRQQVESTMNRYWASTRRQ. The helical transmembrane segment at 151–171 threads the bilayer; sequence ILIYLYSCICITTNYFINSFV. The Extracellular portion of the chain corresponds to 172–217; that stretch reads INLYRYFTKPKGSYDIMLPLPSLYPAWEHKGLEFPYYHIQMYLETC. The helical transmembrane segment at 218-238 threads the bilayer; that stretch reads SLYICGMCAVSFDGVFIVLCL. The Cytoplasmic portion of the chain corresponds to 239–296; it reads HSVGLMRSLNQMVEQATSELVPPDRRVEYLRCCIYQYQRVANFATEVNNCFRHITFTQ. The chain crosses the membrane as a helical span at residues 297 to 317; that stretch reads FLLSLFNWGLALFQMSVGLGN. Residue N318 is glycosylated (N-linked (GlcNAc...) asparagine). Residues 318-320 are Extracellular-facing; that stretch reads NSS. Residues 321–341 traverse the membrane as a helical segment; it reads ITMIRMTMYLVAAGYQIVVYC. Residues 342 to 387 lie on the Cytoplasmic side of the membrane; sequence YNGQRFATASEEIANAFYQVRWYGESREFRHLIRMMLMRTNRGFRL. Residues 388-408 traverse the membrane as a helical segment; it reads DVSWFMQMSLPTLMAMVRTSG. At 409 to 420 the chain is on the extracellular side; it reads QYFLLLQNVNQK.

Belongs to the insect chemoreceptor superfamily. Heteromeric odorant receptor channel (TC 1.A.69) family. Or63a subfamily. As to quaternary structure, interacts with Orco. Complexes exist early in the endomembrane system in olfactory sensory neurons (OSNs), coupling these complexes to the conserved ciliary trafficking pathway.

Its subcellular location is the cell membrane. Its function is as follows. Odorant receptor which mediates acceptance or avoidance behavior, depending on its substrates. The odorant receptor repertoire encodes a large collection of odor stimuli that vary widely in identity, intensity, and duration. May form a complex with Orco to form odorant-sensing units, providing sensitive and prolonged odorant signaling and calcium permeability. Involved in the behavioral responses to butyl acetate, isoamyl acetate, and hexanoic acid. This Drosophila melanogaster (Fruit fly) protein is Odorant receptor 63a (Or63a).